We begin with the raw amino-acid sequence, 277 residues long: Putative protein-disulfide oxidoreductase RC0029 (277 aa).

The signal sequence occupies residues 1-22; it reads MRSIFIILIFLLFLSSCSEEKA. A disordered region spans residues 34–80; the sequence is EHETQNNETSKATNQEAVNSENTTESIVPANDNNQTDEVSTPASQKQ. Positions 39-80 are enriched in polar residues; the sequence is NNETSKATNQEAVNSENTTESIVPANDNNQTDEVSTPASQKQ. Positions 76 to 265 constitute a Thioredoxin domain; sequence ASQKQKNPAI…ISTAVDKALE (190 aa). Cysteines 118 and 121 form a disulfide.

It belongs to the thioredoxin family. DsbA subfamily.

Its subcellular location is the periplasm. May be required for disulfide bond formation in some proteins. The sequence is that of Putative protein-disulfide oxidoreductase RC0029 from Rickettsia conorii (strain ATCC VR-613 / Malish 7).